We begin with the raw amino-acid sequence, 327 residues long: uncharacterized protein (327 aa).

A signal peptide spans Met-1–Ala-24.

Belongs to the fimbrial protein family.

Its subcellular location is the fimbrium. Part of the sfmACDHF fimbrial operon. Could contribute to adhesion to various surfaces in specific environmental niches. Increases adhesion to eukaryotic T24 bladder epithelial cells in the absence of fim genes. This is an uncharacterized protein from Escherichia coli (strain K12).